Here is a 515-residue protein sequence, read N- to C-terminus: mRNA export factor ICP27 homolog (515 aa).

Cys-230, His-335, Cys-337, and Cys-342 together coordinate Zn(2+). The segment at 230–342 (CVFNDNGHGD…SNHKCDDVSC (113 aa)) adopts a CHC2-type zinc-finger fold. Residues 398–408 (YSTNHDLPQTS) are compositionally biased toward polar residues. The segment at 398–422 (YSTNHDLPQTSHRSHKNHGTPKVKS) is disordered. The span at 409-422 (HRSHKNHGTPKVKS) shows a compositional bias: basic residues.

The protein belongs to the HHV-1 ICP27 protein family.

It localises to the virion tegument. The protein resides in the virion. It is found in the host nucleus. The protein localises to the host cytoplasm. In terms of biological role, immediate early (EI) protein that plays many roles during productive infection including regulation of viral gene expression and nuclear export of intronless viral RNAs. The chain is mRNA export factor ICP27 homolog from Human herpesvirus 6A (strain Uganda-1102) (HHV-6 variant A).